The sequence spans 91 residues: Acylphosphatase (91 aa).

In terms of domain architecture, Acylphosphatase-like spans 6–91 (CMRCYISGRV…WEDYISFDVL (86 aa)). Residues R21 and N39 contribute to the active site.

This sequence belongs to the acylphosphatase family.

The catalysed reaction is an acyl phosphate + H2O = a carboxylate + phosphate + H(+). The chain is Acylphosphatase (acyP) from Legionella pneumophila subsp. pneumophila (strain Philadelphia 1 / ATCC 33152 / DSM 7513).